Reading from the N-terminus, the 327-residue chain is Pyruvate dehydrogenase E1 component subunit beta (327 aa).

A thiamine diphosphate-binding site is contributed by Glu60. Residues Val113, Ala161, Ile162, and Glu164 each coordinate K(+).

As to quaternary structure, heterodimer of an alpha and a beta chain. The cofactor is thiamine diphosphate.

The protein resides in the plastid. It localises to the chloroplast. It catalyses the reaction N(6)-[(R)-lipoyl]-L-lysyl-[protein] + pyruvate + H(+) = N(6)-[(R)-S(8)-acetyldihydrolipoyl]-L-lysyl-[protein] + CO2. In terms of biological role, the pyruvate dehydrogenase complex catalyzes the overall conversion of pyruvate to acetyl-CoA and CO(2). It contains multiple copies of three enzymatic components: pyruvate dehydrogenase (E1), dihydrolipoamide acetyltransferase (E2) and lipoamide dehydrogenase (E3). This chain is Pyruvate dehydrogenase E1 component subunit beta (pdhB), found in Cyanidium caldarium (Red alga).